We begin with the raw amino-acid sequence, 333 residues long: UPF0324 membrane protein WS2204 (333 aa).

9 helical membrane passes run S4–A26, F31–Y53, I59–F81, L88–G110, S125–S147, T154–Y176, V218–L240, P253–L275, and A310–L332.

The protein belongs to the UPF0324 family.

The protein localises to the cell membrane. This chain is UPF0324 membrane protein WS2204, found in Wolinella succinogenes (strain ATCC 29543 / DSM 1740 / CCUG 13145 / JCM 31913 / LMG 7466 / NCTC 11488 / FDC 602W) (Vibrio succinogenes).